The primary structure comprises 164 residues: Phosphopantetheine adenylyltransferase (164 aa).

Residue Ser9 participates in substrate binding. ATP contacts are provided by residues 9–10 and His17; that span reads SF. 3 residues coordinate substrate: Lys41, Leu73, and Lys87. ATP-binding positions include 88–90, Glu98, and 123–129; these read GLR and YSYISSS.

The protein belongs to the bacterial CoaD family. Homohexamer. Mg(2+) is required as a cofactor.

It is found in the cytoplasm. The catalysed reaction is (R)-4'-phosphopantetheine + ATP + H(+) = 3'-dephospho-CoA + diphosphate. It participates in cofactor biosynthesis; coenzyme A biosynthesis; CoA from (R)-pantothenate: step 4/5. Functionally, reversibly transfers an adenylyl group from ATP to 4'-phosphopantetheine, yielding dephospho-CoA (dPCoA) and pyrophosphate. This Clostridium perfringens (strain 13 / Type A) protein is Phosphopantetheine adenylyltransferase.